Consider the following 422-residue polypeptide: Probable glycosidase CRR1 (422 aa).

An N-terminal signal peptide occupies residues 1 to 20 (MRISILQLVPVVGYIGFALG). The 273-residue stretch at 67–339 (DEESCAPIPA…WENSPDIIEK (273 aa)) folds into the GH16 domain. The active-site Nucleophile is the E217. E221 (proton donor) is an active-site residue.

This sequence belongs to the glycosyl hydrolase 16 family. CRR1 subfamily.

Its subcellular location is the spore wall. Functionally, spore specific glycosidase involved in spore wall assembly during sporulation. May be involved in copper import. The sequence is that of Probable glycosidase CRR1 (CRR1) from Saccharomyces cerevisiae (strain ATCC 204508 / S288c) (Baker's yeast).